We begin with the raw amino-acid sequence, 293 residues long: Adenylyl-sulfate kinase 2, chloroplastic (293 aa).

The transit peptide at 1–59 (MEGLAIRASRPSVFCSIPGLGGDSHRKPPSDGFLKLPASSIPADSRKLVANSTSFHPIS) directs the protein to the chloroplast. 122–130 (GLSGSGKST) lines the ATP pocket. Residues aspartate 152, arginine 155, arginine 169, asparagine 172, 195 to 196 (IS), and glycine 245 contribute to the substrate site. The Phosphoserine intermediate role is filled by serine 196.

It belongs to the APS kinase family. In terms of assembly, interacts with APK1. In terms of tissue distribution, expressed in root vasculature, root tips, leaf epidermal cells and funiculus of developing seeds.

The protein resides in the plastid. Its subcellular location is the chloroplast. The catalysed reaction is adenosine 5'-phosphosulfate + ATP = 3'-phosphoadenylyl sulfate + ADP + H(+). Its pathway is sulfur metabolism; hydrogen sulfide biosynthesis; sulfite from sulfate: step 2/3. Functionally, catalyzes the synthesis of activated sulfate. Essential for plant reproduction and viability. Required for the production of glucosinolates. In Arabidopsis thaliana (Mouse-ear cress), this protein is Adenylyl-sulfate kinase 2, chloroplastic (APK2).